The following is a 70-amino-acid chain: Beta-defensin 131B (70 aa).

The signal sequence occupies residues Met-1 to Ser-22. 3 disulfide bridges follow: Cys-29–Cys-56, Cys-36–Cys-50, and Cys-40–Cys-57.

It belongs to the beta-defensin family.

The protein localises to the secreted. In terms of biological role, has antibacterial activity. This is Beta-defensin 131B from Homo sapiens (Human).